The sequence spans 275 residues: Probable ribosomal RNA small subunit methyltransferase A (275 aa).

5 residues coordinate S-adenosyl-L-methionine: Leu13, Gly38, Glu59, Asp84, and Asn101.

This sequence belongs to the class I-like SAM-binding methyltransferase superfamily. rRNA adenine N(6)-methyltransferase family. RsmA subfamily.

It localises to the cytoplasm. Its function is as follows. Specifically dimethylates two adjacent adenosines in the loop of a conserved hairpin near the 3'-end of 16S rRNA in the 30S particle. May play a critical role in biogenesis of 30S subunits. This Methanocaldococcus jannaschii (strain ATCC 43067 / DSM 2661 / JAL-1 / JCM 10045 / NBRC 100440) (Methanococcus jannaschii) protein is Probable ribosomal RNA small subunit methyltransferase A.